The sequence spans 597 residues: Elongation factor 4 (597 aa).

A tr-type G domain is found at K2–T184. Residues D14–T19 and N131–D134 each bind GTP.

This sequence belongs to the TRAFAC class translation factor GTPase superfamily. Classic translation factor GTPase family. LepA subfamily.

Its subcellular location is the cell inner membrane. It carries out the reaction GTP + H2O = GDP + phosphate + H(+). Its function is as follows. Required for accurate and efficient protein synthesis under certain stress conditions. May act as a fidelity factor of the translation reaction, by catalyzing a one-codon backward translocation of tRNAs on improperly translocated ribosomes. Back-translocation proceeds from a post-translocation (POST) complex to a pre-translocation (PRE) complex, thus giving elongation factor G a second chance to translocate the tRNAs correctly. Binds to ribosomes in a GTP-dependent manner. The protein is Elongation factor 4 of Neisseria meningitidis serogroup C / serotype 2a (strain ATCC 700532 / DSM 15464 / FAM18).